The chain runs to 346 residues: UDP-N-acetylenolpyruvoylglucosamine reductase (346 aa).

Residues 18-189 form the FAD-binding PCMH-type domain; sequence LRAQARAFIA…VSVVFALKTH (172 aa). Residue Arg-165 is part of the active site. Ser-240 acts as the Proton donor in catalysis. Glu-336 is an active-site residue.

This sequence belongs to the MurB family. Requires FAD as cofactor.

The protein resides in the cytoplasm. It catalyses the reaction UDP-N-acetyl-alpha-D-muramate + NADP(+) = UDP-N-acetyl-3-O-(1-carboxyvinyl)-alpha-D-glucosamine + NADPH + H(+). It functions in the pathway cell wall biogenesis; peptidoglycan biosynthesis. Its function is as follows. Cell wall formation. The chain is UDP-N-acetylenolpyruvoylglucosamine reductase from Neisseria meningitidis serogroup C (strain 053442).